A 474-amino-acid chain; its full sequence is Ribosomal RNA small subunit methyltransferase F (474 aa).

S-adenosyl-L-methionine-binding positions include 119 to 125, E143, D170, and D188; that span reads AAAPGSK. C241 serves as the catalytic Nucleophile.

It belongs to the class I-like SAM-binding methyltransferase superfamily. RsmB/NOP family.

The protein resides in the cytoplasm. The catalysed reaction is cytidine(1407) in 16S rRNA + S-adenosyl-L-methionine = 5-methylcytidine(1407) in 16S rRNA + S-adenosyl-L-homocysteine + H(+). Its function is as follows. Specifically methylates the cytosine at position 1407 (m5C1407) of 16S rRNA. In Shewanella oneidensis (strain ATCC 700550 / JCM 31522 / CIP 106686 / LMG 19005 / NCIMB 14063 / MR-1), this protein is Ribosomal RNA small subunit methyltransferase F.